The sequence spans 950 residues: Leucine--tRNA ligase (950 aa).

A 'HIGH' region motif is present at residues 66–77; the sequence is PYPSGAGLHVGH. The 'KMSKS' region signature appears at 721 to 725; it reads KIGKS. Residue lysine 724 participates in ATP binding.

This sequence belongs to the class-I aminoacyl-tRNA synthetase family.

Its subcellular location is the cytoplasm. It carries out the reaction tRNA(Leu) + L-leucine + ATP = L-leucyl-tRNA(Leu) + AMP + diphosphate. The protein is Leucine--tRNA ligase of Nocardia farcinica (strain IFM 10152).